Reading from the N-terminus, the 290-residue chain is N-acetylmannosamine kinase (290 aa).

Residues alanine 6–lysine 13 and glycine 132–leucine 139 each bind ATP. 4 residues coordinate Zn(2+): histidine 156, cysteine 166, cysteine 168, and cysteine 173.

It belongs to the ROK (NagC/XylR) family. NanK subfamily. Homodimer.

It carries out the reaction an N-acyl-D-mannosamine + ATP = an N-acyl-D-mannosamine 6-phosphate + ADP + H(+). It participates in amino-sugar metabolism; N-acetylneuraminate degradation; D-fructose 6-phosphate from N-acetylneuraminate: step 2/5. Its function is as follows. Catalyzes the phosphorylation of N-acetylmannosamine (ManNAc) to ManNAc-6-P. This chain is N-acetylmannosamine kinase, found in Yersinia pseudotuberculosis serotype O:3 (strain YPIII).